We begin with the raw amino-acid sequence, 261 residues long: Ribosomal RNA small subunit methyltransferase J (261 aa).

S-adenosyl-L-methionine contacts are provided by residues 109–110, 125–126, and D179; these read RD and ER.

Belongs to the methyltransferase superfamily. RsmJ family.

Its subcellular location is the cytoplasm. The enzyme catalyses guanosine(1516) in 16S rRNA + S-adenosyl-L-methionine = N(2)-methylguanosine(1516) in 16S rRNA + S-adenosyl-L-homocysteine + H(+). Functionally, specifically methylates the guanosine in position 1516 of 16S rRNA. This Pseudomonas paraeruginosa (strain DSM 24068 / PA7) (Pseudomonas aeruginosa (strain PA7)) protein is Ribosomal RNA small subunit methyltransferase J.